The primary structure comprises 178 residues: Interleukin-10 (178 aa).

An N-terminal signal peptide occupies residues 1 to 18 (MHSSALLCCLVLLTGVRA). 2 cysteine pairs are disulfide-bonded: Cys-30–Cys-126 and Cys-80–Cys-132. N-linked (GlcNAc...) asparagine glycosylation occurs at Asn-134.

Belongs to the IL-10 family. As to quaternary structure, homodimer. Interacts with IL10RA and IL10RB.

The protein localises to the secreted. Its function is as follows. Major immune regulatory cytokine that acts on many cells of the immune system where it has profound anti-inflammatory functions, limiting excessive tissue disruption caused by inflammation. Mechanistically, IL10 binds to its heterotetrameric receptor comprising IL10RA and IL10RB leading to JAK1 and STAT2-mediated phosphorylation of STAT3. In turn, STAT3 translocates to the nucleus where it drives expression of anti-inflammatory mediators. Targets antigen-presenting cells (APCs) such as macrophages and monocytes and inhibits their release of pro-inflammatory cytokines including granulocyte-macrophage colony-stimulating factor /GM-CSF, granulocyte colony-stimulating factor/G-CSF, IL-1 alpha, IL-1 beta, IL-6, IL-8 and TNF-alpha. Also interferes with antigen presentation by reducing the expression of MHC-class II and co-stimulatory molecules, thereby inhibiting their ability to induce T cell activation. In addition, controls the inflammatory response of macrophages by reprogramming essential metabolic pathways including mTOR signaling. The chain is Interleukin-10 (IL10) from Pan troglodytes (Chimpanzee).